Here is a 237-residue protein sequence, read N- to C-terminus: Ribose-5-phosphate isomerase A (237 aa).

Substrate is bound by residues 33–36 (TGST), 90–93 (DGAD), and 103–106 (KGGG). The active-site Proton acceptor is the E112. Residue K130 participates in substrate binding.

Belongs to the ribose 5-phosphate isomerase family. Homodimer.

The catalysed reaction is aldehydo-D-ribose 5-phosphate = D-ribulose 5-phosphate. It participates in carbohydrate degradation; pentose phosphate pathway; D-ribose 5-phosphate from D-ribulose 5-phosphate (non-oxidative stage): step 1/1. Catalyzes the reversible conversion of ribose-5-phosphate to ribulose 5-phosphate. In Gloeothece citriformis (strain PCC 7424) (Cyanothece sp. (strain PCC 7424)), this protein is Ribose-5-phosphate isomerase A.